A 223-amino-acid chain; its full sequence is Ribosomal RNA small subunit methyltransferase G (223 aa).

S-adenosyl-L-methionine contacts are provided by residues glycine 84, leucine 89, 135-136 (VE), and arginine 150.

It belongs to the methyltransferase superfamily. RNA methyltransferase RsmG family.

The protein localises to the cytoplasm. It carries out the reaction guanosine(527) in 16S rRNA + S-adenosyl-L-methionine = N(7)-methylguanosine(527) in 16S rRNA + S-adenosyl-L-homocysteine. In terms of biological role, specifically methylates the N7 position of guanine in position 527 of 16S rRNA. The polypeptide is Ribosomal RNA small subunit methyltransferase G (Saccharophagus degradans (strain 2-40 / ATCC 43961 / DSM 17024)).